The chain runs to 429 residues: 3-phosphoshikimate 1-carboxyvinyltransferase (429 aa).

Positions 20, 21, and 25 each coordinate 3-phosphoshikimate. A phosphoenolpyruvate-binding site is contributed by lysine 20. 2 residues coordinate phosphoenolpyruvate: glycine 89 and arginine 118. Residues serine 164, serine 165, glutamine 166, serine 192, aspartate 311, and lysine 338 each contribute to the 3-phosphoshikimate site. A phosphoenolpyruvate-binding site is contributed by glutamine 166. Aspartate 311 (proton acceptor) is an active-site residue. Residues arginine 342 and arginine 384 each contribute to the phosphoenolpyruvate site.

This sequence belongs to the EPSP synthase family. In terms of assembly, monomer.

It localises to the cytoplasm. The catalysed reaction is 3-phosphoshikimate + phosphoenolpyruvate = 5-O-(1-carboxyvinyl)-3-phosphoshikimate + phosphate. It participates in metabolic intermediate biosynthesis; chorismate biosynthesis. Functionally, catalyzes the transfer of the enolpyruvyl moiety of phosphoenolpyruvate (PEP) to the 5-hydroxyl of shikimate-3-phosphate (S3P) to produce enolpyruvyl shikimate-3-phosphate and inorganic phosphate. The polypeptide is 3-phosphoshikimate 1-carboxyvinyltransferase (Methanococcus vannielii (strain ATCC 35089 / DSM 1224 / JCM 13029 / OCM 148 / SB)).